A 262-amino-acid chain; its full sequence is Transcription factor bHLH81 (262 aa).

Residues 1-29 (MQPTSVGSSGGGDDGGGRGGGGGLSRSGL) are disordered. The span at 8 to 25 (SSGGGDDGGGRGGGGGLS) shows a compositional bias: gly residues. The bHLH domain occupies 190 to 240 (CATHPRSIAERVRRTRISDRIRKLQELVPNMDKQTNTADMLEEAVEYVKVL).

Homodimer. Expressed in flowers.

The protein resides in the nucleus. The polypeptide is Transcription factor bHLH81 (BHLH81) (Arabidopsis thaliana (Mouse-ear cress)).